Reading from the N-terminus, the 199-residue chain is Protein P1 (199 aa).

In Rice tungro bacilliform virus (isolate Philippines) (RTBV), this protein is Protein P1.